The following is a 52-amino-acid chain: ATP synthase F(0) complex subunit 8 (52 aa).

Residues 10–30 (LMTHLWAWLMLYLTTQKIKTF) form a helical membrane-spanning segment.

The protein belongs to the ATPase protein 8 family. In terms of assembly, component of the ATP synthase complex composed at least of ATP5F1A/subunit alpha, ATP5F1B/subunit beta, ATP5MC1/subunit c (homooctomer), MT-ATP6/subunit a, MT-ATP8/subunit 8, ATP5ME/subunit e, ATP5MF/subunit f, ATP5MG/subunit g, ATP5MK/subunit k, ATP5MJ/subunit j, ATP5F1C/subunit gamma, ATP5F1D/subunit delta, ATP5F1E/subunit epsilon, ATP5PF/subunit F6, ATP5PB/subunit b, ATP5PD/subunit d, ATP5PO/subunit OSCP. ATP synthase complex consists of a soluble F(1) head domain (subunits alpha(3) and beta(3)) - the catalytic core - and a membrane F(0) domain - the membrane proton channel (subunits c, a, 8, e, f, g, k and j). These two domains are linked by a central stalk (subunits gamma, delta, and epsilon) rotating inside the F1 region and a stationary peripheral stalk (subunits F6, b, d, and OSCP).

It localises to the mitochondrion membrane. In terms of biological role, subunit 8, of the mitochondrial membrane ATP synthase complex (F(1)F(0) ATP synthase or Complex V) that produces ATP from ADP in the presence of a proton gradient across the membrane which is generated by electron transport complexes of the respiratory chain. ATP synthase complex consist of a soluble F(1) head domain - the catalytic core - and a membrane F(1) domain - the membrane proton channel. These two domains are linked by a central stalk rotating inside the F(1) region and a stationary peripheral stalk. During catalysis, ATP synthesis in the catalytic domain of F(1) is coupled via a rotary mechanism of the central stalk subunits to proton translocation. In vivo, can only synthesize ATP although its ATP hydrolase activity can be activated artificially in vitro. Part of the complex F(0) domain. The sequence is that of ATP synthase F(0) complex subunit 8 from Lycodon semicarinatus (Ryukyu odd-tooth snake).